The primary structure comprises 273 residues: Karrikin insensitive 2 receptor B (273 aa).

Residue Ser-95 is the Nucleophile of the active site. The active site involves Asp-217.

The protein belongs to the AB hydrolase superfamily. In terms of tissue distribution, expressed in stigma.

The protein resides in the nucleus. The protein localises to the cytoplasm. In terms of biological role, may be involved in plant olfaction during volatile communication. This chain is Karrikin insensitive 2 receptor B, found in Petunia hybrida (Petunia).